Here is a 101-residue protein sequence, read N- to C-terminus: Large ribosomal subunit protein uL24 (101 aa).

The protein belongs to the universal ribosomal protein uL24 family. In terms of assembly, part of the 50S ribosomal subunit.

Its function is as follows. One of two assembly initiator proteins, it binds directly to the 5'-end of the 23S rRNA, where it nucleates assembly of the 50S subunit. In terms of biological role, one of the proteins that surrounds the polypeptide exit tunnel on the outside of the subunit. This chain is Large ribosomal subunit protein uL24, found in Elusimicrobium minutum (strain Pei191).